The chain runs to 130 residues: Small ribosomal subunit protein uS9 (130 aa).

It belongs to the universal ribosomal protein uS9 family.

This Streptococcus uberis (strain ATCC BAA-854 / 0140J) protein is Small ribosomal subunit protein uS9.